We begin with the raw amino-acid sequence, 583 residues long: MANFIWDARILTGDGMEMFPADVKNFIAPPWPIEFWKEPVFTSNRANMERQLAIITARNNAATAALNNLDGHTDSIAIEIDRRLRPIEEKIEHIATALADLEHAAAAAELADAAMDIAVSAVEKSGQHKEDVNITSAREIQIVKNDPLLRYDSNLSVDLLNLVYANRNVVNSGVVFGTWYRTLQNALVADKPSVARKIDYHGGRMSRTFIVTAITSLQSCGRLYVGTRYYSSLECAILCLYAFYAKTGTNISHPTNFMSAIESVPTYLEHLSTRLASSDSRQKYGFDWARLPKDTFDSPCGKYERGALHDHSILRALVNSRVLPPGAGSLPRGDVIPEIDAEQGIRNDEVNRAAAALLGRAQPLFLMEDQPLLRSTIDTITALLLLHRLLWNTNIYSARVKNIFQLGAFVPGIVPDLTVGASVDTPGDIIKSDGRNLMFLFQRYVAPMYGTVKGIEFTQLFPGLVALCLDVPLFSGGIFSHRAPLSRVVDVSLGKYQASLVKLISLELENRSRANIVSVCEVITAHDLVTLQYEQGLESLMQIQRPRSRLFETKKLSAFNVETDYDLIYFICLGYIPKLISTL.

Positions 1–49 are interaction with major capsid protein/MCP; the sequence is MANFIWDARILTGDGMEMFPADVKNFIAPPWPIEFWKEPVFTSNRANME.

The protein belongs to the herpesviridae CVC2 protein family. In terms of assembly, heterodimerizes with CVC1. Interacts with major capsid protein/MCP and triplex capsid protein 1/TRX1 at the pentamer vertices. Interacts with the large tegument protein/LTP.

It is found in the virion. Its subcellular location is the host nucleus. Functionally, capsid vertex-specific component that plays a role during viral DNA encapsidation, assuring correct genome cleavage and presumably stabilizing capsids that contain full-length viral genomes. Participates in the interaction between the capsid and the tegument through interaction with the large tegument protein/LTP. This chain is Capsid vertex component 2, found in Gallus gallus (Chicken).